The sequence spans 561 residues: Lysine--tRNA ligase (561 aa).

Mg(2+) is bound by residues glutamate 409 and glutamate 416.

The protein belongs to the class-II aminoacyl-tRNA synthetase family. As to quaternary structure, homodimer. Mg(2+) is required as a cofactor.

The protein localises to the cytoplasm. The catalysed reaction is tRNA(Lys) + L-lysine + ATP = L-lysyl-tRNA(Lys) + AMP + diphosphate. In Nostoc sp. (strain PCC 7120 / SAG 25.82 / UTEX 2576), this protein is Lysine--tRNA ligase.